A 338-amino-acid polypeptide reads, in one-letter code: Glycerol-3-phosphate dehydrogenase [NAD(P)+] (338 aa).

Positions 12, 13, and 110 each coordinate NADPH. Sn-glycerol 3-phosphate contacts are provided by lysine 110, glycine 141, and serine 143. Alanine 145 contributes to the NADPH binding site. 5 residues coordinate sn-glycerol 3-phosphate: lysine 196, aspartate 249, serine 259, arginine 260, and asparagine 261. Lysine 196 serves as the catalytic Proton acceptor. An NADPH-binding site is contributed by arginine 260. Positions 284 and 286 each coordinate NADPH.

Belongs to the NAD-dependent glycerol-3-phosphate dehydrogenase family.

The protein resides in the cytoplasm. The catalysed reaction is sn-glycerol 3-phosphate + NAD(+) = dihydroxyacetone phosphate + NADH + H(+). It carries out the reaction sn-glycerol 3-phosphate + NADP(+) = dihydroxyacetone phosphate + NADPH + H(+). It functions in the pathway membrane lipid metabolism; glycerophospholipid metabolism. Its function is as follows. Catalyzes the reduction of the glycolytic intermediate dihydroxyacetone phosphate (DHAP) to sn-glycerol 3-phosphate (G3P), the key precursor for phospholipid synthesis. The sequence is that of Glycerol-3-phosphate dehydrogenase [NAD(P)+] from Lactiplantibacillus plantarum (strain ATCC BAA-793 / NCIMB 8826 / WCFS1) (Lactobacillus plantarum).